Reading from the N-terminus, the 392-residue chain is Protein FAM53C (392 aa).

Residue Met1 is modified to N-acetylmethionine. The segment at 76–120 (LHLRPPSPGSSPQEQSLSQVLSPEPPDPEKLPVPPAPPSKRHCRS) is disordered. Over residues 85-97 (SSPQEQSLSQVLS) the composition is skewed to low complexity. 2 positions are modified to phosphoserine: Ser122 and Ser162. Disordered regions lie at residues 141-167 (LWTP…PKRV) and 201-294 (DSSH…EDPR). Polar residues predominate over residues 201-215 (DSSHPSAASPQSGSW). Residues Ser232, Ser234, Ser255, and Ser273 each carry the phosphoserine modification. The segment covering 241–256 (ASRFLPSARSSPASSP) has biased composition (low complexity). Residues 278 to 294 (LDARKAGVKRRHEEDPR) show a composition bias toward basic and acidic residues. A Phosphoserine modification is found at Ser299.

It belongs to the FAM53 family.

The protein is Protein FAM53C of Bos taurus (Bovine).